The primary structure comprises 118 residues: MSITSLKNQKEFELINKLGKKFHERYFILVIAKKLPKIFLESKYNTFLGIKVSRKLNKKAVVRNKIKRRIRHLIRIIVSDSKLKAIKFAMIIIPRKGFEEINFSHLNCELSKIILRNI.

This sequence belongs to the RnpA family. As to quaternary structure, consists of a catalytic RNA component (M1 or rnpB) and a protein subunit.

It catalyses the reaction Endonucleolytic cleavage of RNA, removing 5'-extranucleotides from tRNA precursor.. Functionally, RNaseP catalyzes the removal of the 5'-leader sequence from pre-tRNA to produce the mature 5'-terminus. It can also cleave other RNA substrates such as 4.5S RNA. The protein component plays an auxiliary but essential role in vivo by binding to the 5'-leader sequence and broadening the substrate specificity of the ribozyme. The sequence is that of Ribonuclease P protein component from Rickettsia felis (strain ATCC VR-1525 / URRWXCal2) (Rickettsia azadi).